A 480-amino-acid polypeptide reads, in one-letter code: MATPIDVVIMAAGKGTRMKSALPKVLHQLGGRALLAHVIDCAARLSARQAVVIAGHGAADVEAACAHLTRAAGDARQDLSLKFARQEPQLGTGHAVQQALPLLADDGVTLVLSGDVPLTQPATLRALLEQCDGQRLALLTLNMADPTGYGRIVRAGTQATAQASSQVRAIVEHKDATEAQRGIHEIYSGIMAVPTRLLRGWIHRLDNKNVQSEYYLTDIVKFAVADGVAVVAHQITDAAQVAGVNSPVQLAELERVYQLRQATALMEQGVRLADPARFDVRGTLQCGQDVEIDVNCVFAGQVSLGEGVRIGANCVIANATIAAGAVIHPFTHIDGEKLGVQVGEGALIGPFARLRPGAQLGAEVHIGNFVEVKNSTLAKGAKANHLAYLGDATVGERVNYGAGSITANYDGANKHRTVIEADVHIGSNCVLVAPVTIGQGGTVGGGSTITKDTPPGALSVARGKQVSLPNWKRPVKVSKG.

A pyrophosphorylase region spans residues methionine 1–proline 247. UDP-N-acetyl-alpha-D-glucosamine-binding positions include lysine 24, glutamine 86, glycine 91–threonine 92, serine 113–aspartate 115, glycine 150, glutamate 172, and asparagine 245. Residue aspartate 115 coordinates Mg(2+). Asparagine 245 contacts Mg(2+). Residues valine 248–glutamine 268 form a linker region. The N-acetyltransferase stretch occupies residues glycine 269–glycine 480. Positions 355 and 373 each coordinate UDP-N-acetyl-alpha-D-glucosamine. Histidine 385 serves as the catalytic Proton acceptor. Positions 388 and 399 each coordinate UDP-N-acetyl-alpha-D-glucosamine. Acetyl-CoA contacts are provided by residues alanine 402, asparagine 408–tyrosine 409, serine 427, glycine 445, and arginine 462.

The protein in the N-terminal section; belongs to the N-acetylglucosamine-1-phosphate uridyltransferase family. In the C-terminal section; belongs to the transferase hexapeptide repeat family. Homotrimer. Mg(2+) serves as cofactor.

It localises to the cytoplasm. It carries out the reaction alpha-D-glucosamine 1-phosphate + acetyl-CoA = N-acetyl-alpha-D-glucosamine 1-phosphate + CoA + H(+). It catalyses the reaction N-acetyl-alpha-D-glucosamine 1-phosphate + UTP + H(+) = UDP-N-acetyl-alpha-D-glucosamine + diphosphate. Its pathway is nucleotide-sugar biosynthesis; UDP-N-acetyl-alpha-D-glucosamine biosynthesis; N-acetyl-alpha-D-glucosamine 1-phosphate from alpha-D-glucosamine 6-phosphate (route II): step 2/2. It functions in the pathway nucleotide-sugar biosynthesis; UDP-N-acetyl-alpha-D-glucosamine biosynthesis; UDP-N-acetyl-alpha-D-glucosamine from N-acetyl-alpha-D-glucosamine 1-phosphate: step 1/1. The protein operates within bacterial outer membrane biogenesis; LPS lipid A biosynthesis. Its function is as follows. Catalyzes the last two sequential reactions in the de novo biosynthetic pathway for UDP-N-acetylglucosamine (UDP-GlcNAc). The C-terminal domain catalyzes the transfer of acetyl group from acetyl coenzyme A to glucosamine-1-phosphate (GlcN-1-P) to produce N-acetylglucosamine-1-phosphate (GlcNAc-1-P), which is converted into UDP-GlcNAc by the transfer of uridine 5-monophosphate (from uridine 5-triphosphate), a reaction catalyzed by the N-terminal domain. This is Bifunctional protein GlmU from Polaromonas sp. (strain JS666 / ATCC BAA-500).